We begin with the raw amino-acid sequence, 558 residues long: Protein shisa-7 (558 aa).

A signal peptide spans 1-22 (MPALLLLGTVALLASAAGPAGA). The Extracellular portion of the chain corresponds to 23-189 (RPSNDTSSVA…GGEGPGGSTA (167 aa)). N26 carries an N-linked (GlcNAc...) asparagine glycan. Disordered stretches follow at residues 53 to 79 (GGSA…ARAP) and 142 to 181 (TPPP…GRGG). The span at 57-77 (AGTSANATKTSPASGTGAAAR) shows a compositional bias: low complexity. The span at 148–181 (GGAGGAGGAGGGPGPGQAGWLEGGRAGGAGGRGG) shows a compositional bias: gly residues. Positions 154–175 (GGAGGGPGPGQAGWLEGGRAGG) are GRID. A helical transmembrane segment spans residues 190–210 (YVVCGVISFALAVGVGAKVAF). The Cytoplasmic portion of the chain corresponds to 211–558 (SKASRAPRAH…RTASKNEVTV (348 aa)). The segment at 236–263 (QAGPATRPDRARSSSLTPGLGGPDSMAP) is disordered. Position 438 is a phosphoserine (S438). Residues 443–506 (RQSREHLLSP…HHHHALHGSP (64 aa)) are disordered. The segment covering 453 to 462 (PRSPALPPDP) has biased composition (pro residues). A compositionally biased stretch (low complexity) spans 466-477 (ASLAASHSNLLL). Position 532 is a phosphothreonine (T532). The PDZ-binding motif lies at 555–558 (EVTV).

The protein belongs to the shisa family. As to quaternary structure, interacts with GABA(A)R (GABA type A receptor) subunits GABRA1, GABRA2 and GABRG2; the interaction is direct. Does not interact with GABRB2 and GABRB3 subunits. Interacts with AMPAR subunits GRIA1, GRIA2 and GRIA3 and AMPAR auxiliary proteins SHISA6 and SHISA7 in heterologous cells. Interacts (via PDZ-binding motif) with DLG4/PSD-95 (via PDZ domain)in heterologous cells; the interaction is direct. N-glycosylated. In terms of tissue distribution, mainly expressed in neurons. Highly expressed in brain structures including cortex, striatum, olfactory bulb, amygdala hippocampus CA1-3 and dentate gyrus (at protein level).

It localises to the postsynaptic density membrane. Transmembrane protein that regulates gamma-aminobutyric acid type A receptor (GABA(A)R) trafficking, channel deactivation kinetics and pharmacology, necessary for fast inhibitory transmission in the brain. Enhances the action of benzodiazepine, a primary GABA(A)Rs target drug, in the brain. May affect channel kinetics of AMPA-type glutamate receptors (AMPAR), the brain's main excitatory neurotransmitter, necessary for synaptic hippocampal plasticity, and memory recall. May regulate the induction and maintenance of long-term potentiation at Schaffer collaterals/CA3-CA1 excitatory synapses. The protein is Protein shisa-7 of Mus musculus (Mouse).